Here is a 294-residue protein sequence, read N- to C-terminus: Diaminopimelate epimerase (294 aa).

Substrate-binding residues include Asn13, Gln46, and Asn69. The active-site Proton donor is Cys78. Residues 79–80 (GN), Asn173, Asn206, and 224–225 (ER) each bind substrate. Cys233 (proton acceptor) is an active-site residue. Substrate is bound at residue 234–235 (GT).

The protein belongs to the diaminopimelate epimerase family. As to quaternary structure, homodimer.

Its subcellular location is the cytoplasm. The catalysed reaction is (2S,6S)-2,6-diaminopimelate = meso-2,6-diaminopimelate. The protein operates within amino-acid biosynthesis; L-lysine biosynthesis via DAP pathway; DL-2,6-diaminopimelate from LL-2,6-diaminopimelate: step 1/1. Its function is as follows. Catalyzes the stereoinversion of LL-2,6-diaminopimelate (L,L-DAP) to meso-diaminopimelate (meso-DAP), a precursor of L-lysine and an essential component of the bacterial peptidoglycan. This is Diaminopimelate epimerase from Variovorax paradoxus (strain S110).